The following is a 191-amino-acid chain: Probable calcium-binding protein CML8 (191 aa).

The tract at residues Met1–Thr41 is disordered. The segment covering Ala17–Asp27 has biased composition (gly residues). 4 consecutive EF-hand domains span residues Gln43–Glu78, Met79–Glu114, Asp116–Pro151, and Phe152–Gly187. The Ca(2+) site is built by Asp56, Asp58, Ser60, Thr62, Glu67, Asp92, Asp94, Ser96, Thr98, Glu103, Asp129, Asp131, Asn133, Lys135, Asp140, Asp165, Asn167, Asp169, Glu171, and Glu176.

Potential calcium sensor. This chain is Probable calcium-binding protein CML8 (CML8), found in Oryza sativa subsp. japonica (Rice).